The primary structure comprises 434 residues: Galactofuranosyl glycosyltransferase (434 aa).

The Cytoplasmic portion of the chain corresponds to 1–18; that stretch reads MAPPRWHHDRRRMAIFVR. A helical; Signal-anchor for type II membrane protein membrane pass occupies residues 19-38; sequence VGLYTLLFLMGYVVPLIIFY. Asn-39, Asn-100, Asn-162, and Asn-388 each carry an N-linked (GlcNAc...) asparagine glycan. The Lumenal segment spans residues 39 to 434; that stretch reads NRSRADTFED…KLLDFPVDPS (396 aa).

It belongs to the glycosyltransferase 2 family.

It localises to the endoplasmic reticulum membrane. It participates in glycolipid biosynthesis; glycosylphosphatidylinositol-anchor biosynthesis. Functionally, glycosyltransferase that may be responsible for the addition of galactofuranosyl residues to the nascent lipophosphoglycan (LPG) chain. It could alternatively be involved in the synthesis of the galactofuranosyl donor. In Leishmania donovani, this protein is Galactofuranosyl glycosyltransferase (LPG1).